Consider the following 630-residue polypeptide: Polypeptide N-acetylgalactosaminyltransferase 5 (630 aa).

Over 1–20 the chain is Cytoplasmic; that stretch reads MTFSTFTRKMRGRMRSNTCR. A helical; Signal-anchor for type II membrane protein transmembrane segment spans residues 21–38; the sequence is IVLLTSLVWVIFDFVLIA. Over 39–630 the chain is Lumenal; that stretch reads RYSDCIGKDG…MESKFKWQAH (592 aa). N-linked (GlcNAc...) asparagine glycosylation occurs at Asn166. Intrachain disulfides connect Cys177–Cys410, Cys401–Cys479, Cys513–Cys530, Cys553–Cys568, and Cys594–Cys611. Residues 186–296 form a catalytic subdomain A region; the sequence is LPTTSIVIVF…EGWLEPLLAR (111 aa). Residues Asp227 and Arg257 each coordinate substrate. Mn(2+)-binding residues include Asp280 and His282. The segment at 356–418 is catalytic subdomain B; it reads PLRTPTMAGG…PCSHVGHVFR (63 aa). A substrate-binding site is contributed by Trp387. Mn(2+) is bound at residue His415. Substrate contacts are provided by Arg418 and Tyr423. The Ricin B-type lectin domain occupies 500–622; that stretch reads YYLGEIRNAE…YGKGQQWLME (123 aa).

Belongs to the glycosyltransferase 2 family. GalNAc-T subfamily. Requires Mn(2+) as cofactor. In terms of tissue distribution, expressed during oogenesis, in the somatically derived follicle cells that surround the developing oocyte, which are involved in the maturation of the oocyte and construction of the egg shell, as well as playing a role in subsequent embryonic pattern formation. During embryonic stages 9-11, expressed in the primordium of the foregut, midgut and hindgut. Expressed in salivary glands from embryonic stage 12 onwards. During embryonic stages 12-13, expressed in the posterior midgut and hindgut. During embryonic stages 14-17, expressed in the hindgut and the posterior spiracles. Expression is also detected in the epidermis and antennomaxillary complex at embryonic stages 16-17. In third instar larvae, ubiquitously expressed in wing, eye-antennal, leg and haltere imaginal disks.

The protein resides in the golgi apparatus membrane. It carries out the reaction L-seryl-[protein] + UDP-N-acetyl-alpha-D-galactosamine = a 3-O-[N-acetyl-alpha-D-galactosaminyl]-L-seryl-[protein] + UDP + H(+). The catalysed reaction is L-threonyl-[protein] + UDP-N-acetyl-alpha-D-galactosamine = a 3-O-[N-acetyl-alpha-D-galactosaminyl]-L-threonyl-[protein] + UDP + H(+). It participates in protein modification; protein glycosylation. Its function is as follows. Catalyzes the initial reaction in O-linked oligosaccharide biosynthesis, the transfer of an N-acetyl-D-galactosamine residue to a serine or threonine residue on the protein receptor. It can both act as a peptide transferase that transfers GalNAc onto unmodified peptide substrates, and as a glycopeptide transferase that requires the prior addition of a GalNAc on a peptide before adding additional GalNAc moieties. Prefers EA2 as substrate. In the larval midgut, required for O-glycosylation of apical and luminal proteins within copper cells enabling proper gut acidification. The chain is Polypeptide N-acetylgalactosaminyltransferase 5 from Drosophila melanogaster (Fruit fly).